Reading from the N-terminus, the 357-residue chain is MNDNPATDKVFKEVSSLYKQYFEYAILVRKWLEIPDDLSHREIGYGMLKKVDNRNMSFNTERDYLAWVLKESPFHLYKSLSYMEYPDIVGGAAKKGLFKREVAFDIDTHKTEKCTHDDSWICEECLGEARNQVLILIEDFLFPDFGLDEKDLKIVFTGNRGYHIYLKPEDPELLKRIEKWGKNERRYFIEYILGKNLNLRNMGSRWKNILVREFNKNKIATKKFEKTSDWKTEIDNRKDTTRRTIYETIDKVKSRLELDEKVMDDDIRLLRTIGSLHGYTGLMVKEITYNSLKNNQFDPLNHGVFSKFHKKMYNVKIKQELDPLTLKGDTFDHNSTEIPASYLLFLFGHGIDFEILE.

Catalysis depends on residues D105, D107, and D259.

This sequence belongs to the eukaryotic-type primase small subunit family. Heterodimer of a small subunit (PriS) and a large subunit (PriL). Requires Mg(2+) as cofactor. Mn(2+) is required as a cofactor.

Its function is as follows. Catalytic subunit of DNA primase, an RNA polymerase that catalyzes the synthesis of short RNA molecules used as primers for DNA polymerase during DNA replication. The small subunit contains the primase catalytic core and has DNA synthesis activity on its own. Binding to the large subunit stabilizes and modulates the activity, increasing the rate of DNA synthesis while decreasing the length of the DNA fragments, and conferring RNA synthesis capability. The DNA polymerase activity may enable DNA primase to also catalyze primer extension after primer synthesis. May also play a role in DNA repair. The chain is DNA primase small subunit PriS from Methanococcus maripaludis (strain DSM 14266 / JCM 13030 / NBRC 101832 / S2 / LL).